The sequence spans 214 residues: Ras-related protein Rab2BV (214 aa).

19-26 (GDSGVGKS) serves as a coordination point for GTP. The short motif at 41–49 (SKSTIGVEF) is the Effector region element. Residues 67–71 (DTAGQ) and 125–128 (NKSD) contribute to the GTP site. Residues Cys-211 and Cys-212 are each lipidated (S-geranylgeranyl cysteine).

Belongs to the small GTPase superfamily. Rab family.

Its subcellular location is the cell membrane. This Beta vulgaris (Sugar beet) protein is Ras-related protein Rab2BV (RAB2BV).